The sequence spans 245 residues: Ribosomal RNA large subunit methyltransferase E (245 aa).

Residues glycine 83, tryptophan 85, aspartate 111, aspartate 127, and aspartate 156 each contribute to the S-adenosyl-L-methionine site. The Proton acceptor role is filled by lysine 196.

Belongs to the class I-like SAM-binding methyltransferase superfamily. RNA methyltransferase RlmE family.

It localises to the cytoplasm. It carries out the reaction uridine(2552) in 23S rRNA + S-adenosyl-L-methionine = 2'-O-methyluridine(2552) in 23S rRNA + S-adenosyl-L-homocysteine + H(+). Functionally, specifically methylates the uridine in position 2552 of 23S rRNA at the 2'-O position of the ribose in the fully assembled 50S ribosomal subunit. The protein is Ribosomal RNA large subunit methyltransferase E of Polaromonas naphthalenivorans (strain CJ2).